A 369-amino-acid chain; its full sequence is Glutamate 5-kinase (369 aa).

An ATP-binding site is contributed by K9. Residues S49, D136, and N148 each coordinate substrate. ATP contacts are provided by residues 168–169 (TD) and 210–216 (TGGMLTK). Residues 275 to 355 (RGGVYVDEGA…KGVFIHRDDW (81 aa)) enclose the PUA domain.

Belongs to the glutamate 5-kinase family.

It is found in the cytoplasm. It catalyses the reaction L-glutamate + ATP = L-glutamyl 5-phosphate + ADP. It functions in the pathway amino-acid biosynthesis; L-proline biosynthesis; L-glutamate 5-semialdehyde from L-glutamate: step 1/2. Functionally, catalyzes the transfer of a phosphate group to glutamate to form L-glutamate 5-phosphate. The sequence is that of Glutamate 5-kinase from Neisseria meningitidis serogroup A / serotype 4A (strain DSM 15465 / Z2491).